Consider the following 49-residue polypeptide: Defensin Tm-AMP-D1.2 (49 aa).

4 disulfides stabilise this stretch: Cys-3–Cys-49, Cys-14–Cys-34, Cys-20–Cys-43, and Cys-24–Cys-45.

In terms of biological role, plant defense peptide. This is Defensin Tm-AMP-D1.2 from Triticum monococcum (Einkorn wheat).